A 117-amino-acid polypeptide reads, in one-letter code: UPF0342 protein Bcer98_0695 (117 aa).

This sequence belongs to the UPF0342 family.

In Bacillus cytotoxicus (strain DSM 22905 / CIP 110041 / 391-98 / NVH 391-98), this protein is UPF0342 protein Bcer98_0695.